The following is a 388-amino-acid chain: MKFVDEAVIKVQAGDGGNGVVSFWREKFVTKGGPDGGDGGDGGDVYIQADENLNTLIDYRFQRFYEAERGQNGSGGNCTGKRGKDITLRVPVGTRAVDIHTNEIVAEVAEHGKKVMVAKGGWHGLGNTRFKSSVNRAPRQKTMGTKGEIRELRLELLLLADVGMLGLPNAGKSTFIRAVSAAKPKVADYPFTTLIPSLGVVSVVPEKSFVVADIPGLIEGAADGAGLGIRFLKHLERCRVLLHMIDIFPIDQSDPVQNALTIIDELEQYSEKLANKPRWLVFNKVDLVSEEQADEIIQEVIDALGWEEQYFKISAVNRQGTKELCYKLADFMEQLPREEQEVSEEEKVNFMWDYHPDANQGEVITEDDDDWDDWDDEEDDGHVIYVRE.

One can recognise an Obg domain in the interval 1–159 (MKFVDEAVIK…RELRLELLLL (159 aa)). Positions 160–333 (ADVGMLGLPN…LCYKLADFME (174 aa)) constitute an OBG-type G domain. GTP contacts are provided by residues 166 to 173 (GLPNAGKS), 191 to 195 (FTTLI), 213 to 216 (DIPG), 283 to 286 (NKVD), and 314 to 316 (SAV). Mg(2+)-binding residues include serine 173 and threonine 193. Positions 359–380 (NQGEVITEDDDDWDDWDDEEDD) are disordered. Acidic residues predominate over residues 364-380 (ITEDDDDWDDWDDEEDD).

This sequence belongs to the TRAFAC class OBG-HflX-like GTPase superfamily. OBG GTPase family. As to quaternary structure, monomer. The cofactor is Mg(2+).

It is found in the cytoplasm. Its function is as follows. An essential GTPase which binds GTP, GDP and possibly (p)ppGpp with moderate affinity, with high nucleotide exchange rates and a fairly low GTP hydrolysis rate. Plays a role in control of the cell cycle, stress response, ribosome biogenesis and in those bacteria that undergo differentiation, in morphogenesis control. This is GTPase Obg from Vibrio vulnificus (strain YJ016).